An 874-amino-acid chain; its full sequence is Alanine--tRNA ligase (874 aa).

Zn(2+) contacts are provided by His-562, His-566, Cys-665, and His-669.

This sequence belongs to the class-II aminoacyl-tRNA synthetase family. Requires Zn(2+) as cofactor.

The protein localises to the cytoplasm. The catalysed reaction is tRNA(Ala) + L-alanine + ATP = L-alanyl-tRNA(Ala) + AMP + diphosphate. Its function is as follows. Catalyzes the attachment of alanine to tRNA(Ala) in a two-step reaction: alanine is first activated by ATP to form Ala-AMP and then transferred to the acceptor end of tRNA(Ala). Also edits incorrectly charged Ser-tRNA(Ala) and Gly-tRNA(Ala) via its editing domain. This is Alanine--tRNA ligase from Pseudomonas putida (strain ATCC 47054 / DSM 6125 / CFBP 8728 / NCIMB 11950 / KT2440).